Here is a 425-residue protein sequence, read N- to C-terminus: Glyco-Gag protein (425 aa).

At 1-54 (MSRASSGTATGARLFGISSVLGEYRVLIGDEGAGPSRSPSEVSFSVWYRSRAAR) the chain is on the cytoplasmic side. Residues 55–75 (LVIVCLVASFLVPCLTFLIAE) traverse the membrane as a helical segment. Over 76 to 425 (TVMGQTITTP…VVQGKEETPA (350 aa)) the chain is Extracellular. N-linked (GlcNAc...) asparagine; by host glycosylation occurs at Asn137. Positions 174 to 285 (VRPFLPPPKP…LREGPNNRPQ (112 aa)) are disordered. The segment covering 177–196 (FLPPPKPPTSLPQPLSPQPS) has biased composition (pro residues). The segment covering 197 to 209 (APLTSSLYPVLPK) has biased composition (low complexity). Pro residues-rich tracts occupy residues 213-223 (PKPPVLPPDPS) and 233-248 (EPPPYPGGHGPPPSGP).

In terms of processing, glycosylated by host. Post-translationally, cleaved by host near the middle of the molecule, releasing the c-terminal half containing capsid and nucleoprotein domains op GAG.

It is found in the host cell membrane. Its function is as follows. Plays a role in viral particle release. Presumably acts by facilitating the fission of the virion bud at the cell surface. In Felidae (cat family), this protein is Glyco-Gag protein.